The chain runs to 296 residues: Beta-lactamase (296 aa).

Residues 1–21 form the signal peptide; the sequence is MKAYFIAILTLFTCIATVVRA. S66 (acyl-ester intermediate) is an active-site residue. Substrate is bound at residue 235–237; sequence KTG.

This sequence belongs to the class-A beta-lactamase family.

It catalyses the reaction a beta-lactam + H2O = a substituted beta-amino acid. This chain is Beta-lactamase (cblA), found in Bacteroides uniformis.